The primary structure comprises 352 residues: Nicotinate-nucleotide--dimethylbenzimidazole phosphoribosyltransferase (352 aa).

The active-site Proton acceptor is glutamate 318.

Belongs to the CobT family.

It catalyses the reaction 5,6-dimethylbenzimidazole + nicotinate beta-D-ribonucleotide = alpha-ribazole 5'-phosphate + nicotinate + H(+). It functions in the pathway nucleoside biosynthesis; alpha-ribazole biosynthesis; alpha-ribazole from 5,6-dimethylbenzimidazole: step 1/2. Catalyzes the synthesis of alpha-ribazole-5'-phosphate from nicotinate mononucleotide (NAMN) and 5,6-dimethylbenzimidazole (DMB). This is Nicotinate-nucleotide--dimethylbenzimidazole phosphoribosyltransferase from Dehalococcoides mccartyi (strain ATCC BAA-2100 / JCM 16839 / KCTC 5957 / BAV1).